An 854-amino-acid chain; its full sequence is Leucine--tRNA ligase (854 aa).

Positions 1–32 are disordered; sequence MARRDMAAETMDPRASTEPSPNEPREPARYDH. Over residues 23-32 the composition is skewed to basic and acidic residues; it reads EPREPARYDH. The 'HIGH' region motif lies at 69-80; the sequence is PYPSGSGLHVGH. A 'KMSKS' region motif is present at residues 633 to 637; that stretch reads KMSKS. ATP is bound at residue Lys636.

This sequence belongs to the class-I aminoacyl-tRNA synthetase family.

It localises to the cytoplasm. It carries out the reaction tRNA(Leu) + L-leucine + ATP = L-leucyl-tRNA(Leu) + AMP + diphosphate. This Sorangium cellulosum (strain So ce56) (Polyangium cellulosum (strain So ce56)) protein is Leucine--tRNA ligase.